A 607-amino-acid polypeptide reads, in one-letter code: Synaptotagmin-like protein 3 (607 aa).

Residues Glu-4–Glu-123 form the RabBD domain. Positions Val-221–Ser-279 are disordered. A compositionally biased stretch (polar residues) spans Ser-230–Ala-241. Residues Lys-248 to Pro-259 are compositionally biased toward basic and acidic residues. 2 consecutive C2 domains span residues Val-305–Tyr-430 and Leu-458–His-590.

In terms of assembly, monomer. Binds NRXN1. Binds RAB27A that has been activated by GTP-binding via its N-terminus. As to expression, highly expressed in spleen and lung. Detected at lower levels in heart and testis.

It is found in the endomembrane system. Functionally, may act as Rab effector protein and play a role in vesicle trafficking. Binds phospholipids in the presence of calcium ions. This is Synaptotagmin-like protein 3 (Sytl3) from Mus musculus (Mouse).